Consider the following 171-residue polypeptide: Large ribosomal subunit protein bL9 (171 aa).

Belongs to the bacterial ribosomal protein bL9 family.

Its function is as follows. Binds to the 23S rRNA. The sequence is that of Large ribosomal subunit protein bL9 from Rickettsia typhi (strain ATCC VR-144 / Wilmington).